The chain runs to 234 residues: Potassium/proton antiporter CemA (234 aa).

4 consecutive transmembrane segments (helical) span residues 8-28, 117-137, 157-177, and 193-213; these read IPLR…WIPL, TICF…LFIL, ILFV…ELLI, and IILS…FKYW.

This sequence belongs to the CemA family.

It localises to the plastid. The protein resides in the chloroplast inner membrane. The enzyme catalyses K(+)(in) + H(+)(out) = K(+)(out) + H(+)(in). In terms of biological role, contributes to K(+)/H(+) antiport activity by supporting proton efflux to control proton extrusion and homeostasis in chloroplasts in a light-dependent manner to modulate photosynthesis. Prevents excessive induction of non-photochemical quenching (NPQ) under continuous-light conditions. Indirectly promotes efficient inorganic carbon uptake into chloroplasts. In Citrus sinensis (Sweet orange), this protein is Potassium/proton antiporter CemA.